We begin with the raw amino-acid sequence, 188 residues long: Elongation factor P (188 aa).

At Lys34 the chain carries N6-(3,6-diaminohexanoyl)-5-hydroxylysine.

The protein belongs to the elongation factor P family. May be beta-lysylated on the epsilon-amino group of Lys-34 by the combined action of EpmA and EpmB, and then hydroxylated on the C5 position of the same residue by EpmC (if this protein is present). Lysylation is critical for the stimulatory effect of EF-P on peptide-bond formation. The lysylation moiety may extend toward the peptidyltransferase center and stabilize the terminal 3-CCA end of the tRNA. Hydroxylation of the C5 position on Lys-34 may allow additional potential stabilizing hydrogen-bond interactions with the P-tRNA.

Its subcellular location is the cytoplasm. The protein operates within protein biosynthesis; polypeptide chain elongation. Functionally, involved in peptide bond synthesis. Alleviates ribosome stalling that occurs when 3 or more consecutive Pro residues or the sequence PPG is present in a protein, possibly by augmenting the peptidyl transferase activity of the ribosome. Modification of Lys-34 is required for alleviation. The chain is Elongation factor P from Coxiella burnetii (strain CbuK_Q154) (Coxiella burnetii (strain Q154)).